The following is a 351-amino-acid chain: Uroporphyrinogen decarboxylase (351 aa).

Substrate-binding positions include 25 to 29 (RQAGR), D74, Y151, S206, and H325.

This sequence belongs to the uroporphyrinogen decarboxylase family. As to quaternary structure, homodimer.

It is found in the cytoplasm. It catalyses the reaction uroporphyrinogen III + 4 H(+) = coproporphyrinogen III + 4 CO2. Its pathway is porphyrin-containing compound metabolism; protoporphyrin-IX biosynthesis; coproporphyrinogen-III from 5-aminolevulinate: step 4/4. Its function is as follows. Catalyzes the decarboxylation of four acetate groups of uroporphyrinogen-III to yield coproporphyrinogen-III. The sequence is that of Uroporphyrinogen decarboxylase from Chlorobium phaeobacteroides (strain BS1).